Reading from the N-terminus, the 568-residue chain is C6 finger domain transcription factor BOA13 (568 aa).

Positions 14-41 (CNECHASKVRCSGERTGCRRCVYNQQKC) form a DNA-binding region, zn(2)-C6 fungal-type. 3 disordered regions span residues 92 to 114 (EANGNDLNSKPNDVPVESSEGIT), 207 to 278 (ATSS…HHNH), and 467 to 490 (RSRSLSTPSPRNTPSTSNSPFSNP). A compositionally biased stretch (basic and acidic residues) spans 242–259 (HSDLSEKQAQHAQNDLRW). The span at 260–274 (RSQSQSYKRPTISTQ) shows a compositional bias: polar residues. Residues 470–490 (SLSTPSPRNTPSTSNSPFSNP) show a composition bias toward low complexity.

The protein resides in the nucleus. Its function is as follows. Transcription factor that probably regulates the gene clusters that mediates the biosynthesis of botcinin acid and its botcinin derivatives, acetate-derived polyketides that contribute to virulence when combined with the sesquiterpene botrydial. Botcinin acid and its derivatives have been shown to induce chlorosis and necrosis during host plant infection, but also have antifungal activities. In Botryotinia fuckeliana (strain B05.10) (Noble rot fungus), this protein is C6 finger domain transcription factor BOA13.